A 499-amino-acid polypeptide reads, in one-letter code: Glycerol kinase (499 aa).

Residue Thr-13 coordinates ADP. Residues Thr-13, Thr-14, and Ser-15 each contribute to the ATP site. Thr-13 contacts sn-glycerol 3-phosphate. An ADP-binding site is contributed by Arg-17. Positions 83, 84, 135, and 245 each coordinate sn-glycerol 3-phosphate. Glycerol contacts are provided by Arg-83, Glu-84, Tyr-135, Asp-245, and Gln-246. ADP-binding residues include Thr-267 and Gly-310. ATP contacts are provided by Thr-267, Gly-310, Gln-314, and Gly-411. Gly-411 and Asn-415 together coordinate ADP.

The protein belongs to the FGGY kinase family.

It carries out the reaction glycerol + ATP = sn-glycerol 3-phosphate + ADP + H(+). It participates in polyol metabolism; glycerol degradation via glycerol kinase pathway; sn-glycerol 3-phosphate from glycerol: step 1/1. Inhibited by fructose 1,6-bisphosphate (FBP). In terms of biological role, key enzyme in the regulation of glycerol uptake and metabolism. Catalyzes the phosphorylation of glycerol to yield sn-glycerol 3-phosphate. In Xanthomonas euvesicatoria pv. vesicatoria (strain 85-10) (Xanthomonas campestris pv. vesicatoria), this protein is Glycerol kinase.